Reading from the N-terminus, the 126-residue chain is Glycine cleavage system H protein (126 aa).

The 82-residue stretch at 23–104 (TLTVGITDHA…PYDNWLFKIK (82 aa)) folds into the Lipoyl-binding domain. Position 64 is an N6-lipoyllysine (K64).

This sequence belongs to the GcvH family. In terms of assembly, the glycine cleavage system is composed of four proteins: P, T, L and H. Requires (R)-lipoate as cofactor.

Its function is as follows. The glycine cleavage system catalyzes the degradation of glycine. The H protein shuttles the methylamine group of glycine from the P protein to the T protein. The sequence is that of Glycine cleavage system H protein from Paraburkholderia phymatum (strain DSM 17167 / CIP 108236 / LMG 21445 / STM815) (Burkholderia phymatum).